Consider the following 207-residue polypeptide: Pyridoxine/pyridoxamine 5'-phosphate oxidase (207 aa).

FMN-binding positions include 53-58 (RMVLLK), 68-69 (YT), lysine 75, and glutamine 97. Lysine 58 is a binding site for substrate. Positions 115, 119, and 123 each coordinate substrate. FMN is bound by residues 132–133 (QS) and tryptophan 177. 183-185 (RLH) contacts substrate. Arginine 187 serves as a coordination point for FMN.

Belongs to the pyridoxamine 5'-phosphate oxidase family. In terms of assembly, homodimer. FMN is required as a cofactor.

It carries out the reaction pyridoxamine 5'-phosphate + O2 + H2O = pyridoxal 5'-phosphate + H2O2 + NH4(+). It catalyses the reaction pyridoxine 5'-phosphate + O2 = pyridoxal 5'-phosphate + H2O2. The protein operates within cofactor metabolism; pyridoxal 5'-phosphate salvage; pyridoxal 5'-phosphate from pyridoxamine 5'-phosphate: step 1/1. Its pathway is cofactor metabolism; pyridoxal 5'-phosphate salvage; pyridoxal 5'-phosphate from pyridoxine 5'-phosphate: step 1/1. Catalyzes the oxidation of either pyridoxine 5'-phosphate (PNP) or pyridoxamine 5'-phosphate (PMP) into pyridoxal 5'-phosphate (PLP). This Bartonella quintana (strain Toulouse) (Rochalimaea quintana) protein is Pyridoxine/pyridoxamine 5'-phosphate oxidase.